A 984-amino-acid polypeptide reads, in one-letter code: Probable beta-galactosidase C (984 aa).

The first 23 residues, 1–23 (MRLLSFIYLVWLALLTGTPQVSA), serve as a signal peptide directing secretion. Substrate is bound by residues Y82, N127, A128, E129, and N187. E188 serves as the catalytic Proton donor. N197 carries an N-linked (GlcNAc...) asparagine glycan. Y251 is a substrate binding site. C257 and C304 are joined by a disulfide. N276 is a glycosylation site (N-linked (GlcNAc...) asparagine). The active-site Nucleophile is E287. Y353 lines the substrate pocket. Residues N391, N421, N434, N517, N602, N677, N715, N720, N759, and N805 are each glycosylated (N-linked (GlcNAc...) asparagine).

This sequence belongs to the glycosyl hydrolase 35 family.

It is found in the secreted. The enzyme catalyses Hydrolysis of terminal non-reducing beta-D-galactose residues in beta-D-galactosides.. Its function is as follows. Cleaves beta-linked terminal galactosyl residues from gangliosides, glycoproteins, and glycosaminoglycans. The polypeptide is Probable beta-galactosidase C (lacC) (Aspergillus flavus (strain ATCC 200026 / FGSC A1120 / IAM 13836 / NRRL 3357 / JCM 12722 / SRRC 167)).